Reading from the N-terminus, the 208-residue chain is Urease accessory protein UreG 1 (208 aa).

14-21 (GPVGSGKT) is a binding site for GTP.

Belongs to the SIMIBI class G3E GTPase family. UreG subfamily. As to quaternary structure, homodimer. UreD, UreF and UreG form a complex that acts as a GTP-hydrolysis-dependent molecular chaperone, activating the urease apoprotein by helping to assemble the nickel containing metallocenter of UreC. The UreE protein probably delivers the nickel.

The protein resides in the cytoplasm. Facilitates the functional incorporation of the urease nickel metallocenter. This process requires GTP hydrolysis, probably effectuated by UreG. In terms of biological role, disruption of the ure1 gene cluster suggests that it protects brucellae during their passage through the stomach. The major route of infection in human brucellosis is oral. This is Urease accessory protein UreG 1 from Brucella abortus (strain 2308).